We begin with the raw amino-acid sequence, 232 residues long: Phosphatidylserine decarboxylase proenzyme (232 aa).

The active-site Schiff-base intermediate with substrate; via pyruvic acid is the Ser-190. Ser-190 is subject to Pyruvic acid (Ser); by autocatalysis.

It belongs to the phosphatidylserine decarboxylase family. PSD-A subfamily. In terms of assembly, heterodimer of a large membrane-associated beta subunit and a small pyruvoyl-containing alpha subunit. The cofactor is pyruvate. Post-translationally, is synthesized initially as an inactive proenzyme. Formation of the active enzyme involves a self-maturation process in which the active site pyruvoyl group is generated from an internal serine residue via an autocatalytic post-translational modification. Two non-identical subunits are generated from the proenzyme in this reaction, and the pyruvate is formed at the N-terminus of the alpha chain, which is derived from the carboxyl end of the proenzyme. The post-translation cleavage follows an unusual pathway, termed non-hydrolytic serinolysis, in which the side chain hydroxyl group of the serine supplies its oxygen atom to form the C-terminus of the beta chain, while the remainder of the serine residue undergoes an oxidative deamination to produce ammonia and the pyruvoyl prosthetic group on the alpha chain.

It is found in the cell membrane. The catalysed reaction is a 1,2-diacyl-sn-glycero-3-phospho-L-serine + H(+) = a 1,2-diacyl-sn-glycero-3-phosphoethanolamine + CO2. It functions in the pathway phospholipid metabolism; phosphatidylethanolamine biosynthesis; phosphatidylethanolamine from CDP-diacylglycerol: step 2/2. In terms of biological role, catalyzes the formation of phosphatidylethanolamine (PtdEtn) from phosphatidylserine (PtdSer). This chain is Phosphatidylserine decarboxylase proenzyme, found in Cereibacter sphaeroides (strain KD131 / KCTC 12085) (Rhodobacter sphaeroides).